We begin with the raw amino-acid sequence, 187 residues long: 1,6-anhydro-N-acetylmuramyl-L-alanine amidase AmpD (187 aa).

An N-acetylmuramoyl-L-alanine amidase domain is found at 29–167 (TLLVVHNISL…APERKTDPGP (139 aa)). H34 is a Zn(2+) binding site. The active-site Proton acceptor is E116. 2 residues coordinate Zn(2+): H154 and D164.

Belongs to the N-acetylmuramoyl-L-alanine amidase 2 family. Zn(2+) is required as a cofactor.

The protein resides in the cytoplasm. The catalysed reaction is Hydrolyzes the link between N-acetylmuramoyl residues and L-amino acid residues in certain cell-wall glycopeptides.. Involved in cell wall peptidoglycan recycling. Specifically cleaves the amide bond between the lactyl group of N-acetylmuramic acid and the alpha-amino group of the L-alanine in degradation products containing an anhydro N-acetylmuramyl moiety. The sequence is that of 1,6-anhydro-N-acetylmuramyl-L-alanine amidase AmpD from Enterobacter cloacae.